The following is a 367-amino-acid chain: Germination protease (367 aa).

A propeptide spanning residues 1–15 is cleaved from the precursor; the sequence is MKEPLDLSKYAVRTD.

The protein belongs to the peptidase A25 family. In terms of assembly, homotetramer. Autoproteolytically processed. The inactive tetrameric zymogen termed p46 autoprocesses to a smaller form termed p41, which is active only during spore germination.

It catalyses the reaction Endopeptidase action with P4 Glu or Asp, P1 preferably Glu &gt; Asp, P1' hydrophobic and P2' Ala.. Its function is as follows. Initiates the rapid degradation of small, acid-soluble proteins during spore germination. The chain is Germination protease from Bacillus cytotoxicus (strain DSM 22905 / CIP 110041 / 391-98 / NVH 391-98).